A 525-amino-acid polypeptide reads, in one-letter code: Protein-export membrane protein SecD (525 aa).

A run of 6 helical transmembrane segments spans residues Val-16–Thr-36, Gln-368–Tyr-388, Ile-395–Ile-415, Leu-421–Ile-441, Ala-466–Val-486, and Phe-488–Leu-508.

Belongs to the SecD/SecF family. SecD subfamily. In terms of assembly, part of the protein translocation apparatus. Forms a complex with SecF.

It localises to the cell membrane. Involved in protein export. This chain is Protein-export membrane protein SecD, found in Thermococcus gammatolerans (strain DSM 15229 / JCM 11827 / EJ3).